The sequence spans 110 residues: MEVKIFTLLQIALFIALGIHLVVAGPETKEDKKSDVYELFTVEYCGTNCTLLTNGRWTACTGKKGTCRCYHESGEKVGLCLSTEYTDFSEYPNPKSSEIDAAAPLPRETH.

A signal peptide spans 1 to 24; it reads MEVKIFTLLQIALFIALGIHLVVA. 3 disulfide bridges follow: C45–C67, C49–C69, and C60–C80. An N-linked (GlcNAc...) asparagine glycan is attached at N48. Residues 89 to 110 are disordered; the sequence is SEYPNPKSSEIDAAAPLPRETH.

The protein resides in the secreted. Its function is as follows. Salivary chemokine-binding protein which binds to host chemokines CXCL1, CXCL2 and CXCL8. This is Evasin P1166 from Ixodes ricinus (Common tick).